A 274-amino-acid chain; its full sequence is 2,3,4,5-tetrahydropyridine-2,6-dicarboxylate N-succinyltransferase (274 aa).

Substrate is bound by residues Arg106 and Asp143.

Belongs to the transferase hexapeptide repeat family. As to quaternary structure, homotrimer.

Its subcellular location is the cytoplasm. The enzyme catalyses (S)-2,3,4,5-tetrahydrodipicolinate + succinyl-CoA + H2O = (S)-2-succinylamino-6-oxoheptanedioate + CoA. The protein operates within amino-acid biosynthesis; L-lysine biosynthesis via DAP pathway; LL-2,6-diaminopimelate from (S)-tetrahydrodipicolinate (succinylase route): step 1/3. The protein is 2,3,4,5-tetrahydropyridine-2,6-dicarboxylate N-succinyltransferase of Rickettsia typhi (strain ATCC VR-144 / Wilmington).